A 77-amino-acid chain; its full sequence is MSEKLQKIQALIVEQLGVDEEEVTPEASFVDDLGADSLDLVELVMAFEEAFEIRIPDEDAEKIRTVGDAVAYIEERS.

The region spanning 2 to 77 (SEKLQKIQAL…DAVAYIEERS (76 aa)) is the Carrier domain. Residue Ser37 is modified to O-(pantetheine 4'-phosphoryl)serine.

The protein belongs to the acyl carrier protein (ACP) family. Post-translationally, 4'-phosphopantetheine is transferred from CoA to a specific serine of apo-ACP by AcpS. This modification is essential for activity because fatty acids are bound in thioester linkage to the sulfhydryl of the prosthetic group.

The protein resides in the cytoplasm. It functions in the pathway lipid metabolism; fatty acid biosynthesis. In terms of biological role, carrier of the growing fatty acid chain in fatty acid biosynthesis. The polypeptide is Acyl carrier protein (Desulforudis audaxviator (strain MP104C)).